Reading from the N-terminus, the 42-residue chain is Photosystem I reaction center subunit IX (42 aa).

Residues 7-27 (YLSIAPVLATLWFGFLVGSLI) traverse the membrane as a helical segment.

Belongs to the PsaJ family.

It is found in the plastid membrane. In terms of biological role, may help in the organization of the PsaE and PsaF subunits. In Aneura mirabilis (Parasitic liverwort), this protein is Photosystem I reaction center subunit IX.